The sequence spans 581 residues: Arginine--tRNA ligase (581 aa).

The 'HIGH' region motif lies at 122–132; it reads PNVAKPMHVGH.

This sequence belongs to the class-I aminoacyl-tRNA synthetase family. Monomer.

The protein resides in the cytoplasm. It carries out the reaction tRNA(Arg) + L-arginine + ATP = L-arginyl-tRNA(Arg) + AMP + diphosphate. In Francisella tularensis subsp. tularensis (strain WY96-3418), this protein is Arginine--tRNA ligase.